Consider the following 66-residue polypeptide: GRDGYIAQPENCVYHCFPGSSGCDTLCKEKGATSGHCGFLPGSGVACWCDNLPNKVPIVVGGEKCH.

An LCN-type CS-alpha/beta domain is found at 2–66 (RDGYIAQPEN…PIVVGGEKCH (65 aa)). 4 disulfides stabilise this stretch: Cys12-Cys65, Cys16-Cys37, Cys23-Cys47, and Cys27-Cys49.

Belongs to the long (4 C-C) scorpion toxin superfamily. Sodium channel inhibitor family. Alpha subfamily. As to expression, expressed by the venom gland.

The protein resides in the secreted. Functionally, alpha toxins bind voltage-independently at site-3 of sodium channels (Nav) and inhibit the inactivation of the activated channels, thereby blocking neuronal transmission. As it competes neither with the classical alpha-toxin AaH2 nor the beta-toxin Css2, this toxin is an alpha-like toxin. In Buthus occitanus mardochei (Moroccan scorpion), this protein is Alpha-like toxin Bom3.